The sequence spans 626 residues: Janus kinase and microtubule-interacting protein 1 (626 aa).

Residues 1 to 365 (MSKKGRSKGE…KIKNLTRENV (365 aa)) are mediates association with microtubules. Coiled coils occupy residues 19-254 (VQMA…REAE) and 284-413 (ERDV…DDLS). Residues 365-626 (VEMKEKLSAQ…ILFEPKLKFM (262 aa)) are mediates interaction with TYK2 and GABBR1. Ser382 carries the post-translational modification Phosphoserine. Residues 452–461 (ETLSETSCNT) show a composition bias toward polar residues. The tract at residues 452-480 (ETLSETSCNTDRTDRAPATPEEDLDDTTT) is disordered. Thr470 carries the post-translational modification Phosphothreonine. Residues 490-604 (QLTREYQALQ…EFRVLELEVR (115 aa)) are a coiled coil.

The protein belongs to the JAKMIP family. In terms of assembly, homodimer. Forms a complex with GABBR1 and KIF5B/kinesin-1. Interacts with JAK1 and TYK2. In terms of processing, phosphorylated.

Its subcellular location is the cytoplasm. It localises to the cytoskeleton. The protein resides in the membrane. Functionally, associates with microtubules and may play a role in the microtubule-dependent transport of the GABA-B receptor. May play a role in JAK1 signaling and regulate microtubule cytoskeleton rearrangements. The protein is Janus kinase and microtubule-interacting protein 1 (JAKMIP1) of Bos taurus (Bovine).